The primary structure comprises 56 residues: Stable protein 1 (56 aa).

Residues 1–44 form the Stress-response A/B barrel domain; sequence GYTHAFESTFESKSGLQEYLDSAALAAFAEGFLPTLSQRSFNWG.

In Populus euphratica (Euphrates poplar), this protein is Stable protein 1.